We begin with the raw amino-acid sequence, 267 residues long: L-aspartate dehydrogenase (267 aa).

NAD(+)-binding residues include A124 and N190. H218 is a catalytic residue.

It belongs to the L-aspartate dehydrogenase family.

The catalysed reaction is L-aspartate + NADP(+) + H2O = oxaloacetate + NH4(+) + NADPH + H(+). It carries out the reaction L-aspartate + NAD(+) + H2O = oxaloacetate + NH4(+) + NADH + H(+). Its pathway is cofactor biosynthesis; NAD(+) biosynthesis; iminoaspartate from L-aspartate (dehydrogenase route): step 1/1. Its function is as follows. Specifically catalyzes the NAD or NADP-dependent dehydrogenation of L-aspartate to iminoaspartate. This is L-aspartate dehydrogenase from Methanocaldococcus jannaschii (strain ATCC 43067 / DSM 2661 / JAL-1 / JCM 10045 / NBRC 100440) (Methanococcus jannaschii).